Consider the following 225-residue polypeptide: Single-pass membrane and coiled-coil domain-containing protein 3 (225 aa).

Residues 62 to 92 (IKENCDLIIQAIMKIQKELQKVDEALKDKLE) adopt a coiled-coil conformation. The chain crosses the membrane as a helical span at residues 155-175 (IGASLLGSIGVAVLGLGIDMI). A coiled-coil region spans residues 183 to 207 (VEKTQLQAAIKSYEKHLVEFKSASE).

It is found in the membrane. This Homo sapiens (Human) protein is Single-pass membrane and coiled-coil domain-containing protein 3 (SMCO3).